Reading from the N-terminus, the 282-residue chain is Caspase-3 (282 aa).

Active-site residues include His131 and Cys174.

Belongs to the peptidase C14A family. In terms of assembly, heterotetramer that consists of two anti-parallel arranged heterodimers, each one formed by a 17 kDa (p17) and a 12 kDa (p12) subunit.

It localises to the cytoplasm. The enzyme catalyses Strict requirement for an Asp residue at positions P1 and P4. It has a preferred cleavage sequence of Asp-Xaa-Xaa-Asp-|- with a hydrophobic amino-acid residue at P2 and a hydrophilic amino-acid residue at P3, although Val or Ala are also accepted at this position.. Important mediator of apoptosis. At the onset of apoptosis, it proteolytically cleaves poly(ADP-ribose) polymerase PARP1 at a '216-Asp-|-Gly-217' bond. The protein is Caspase-3 (casp3) of Xenopus laevis (African clawed frog).